A 347-amino-acid polypeptide reads, in one-letter code: Histidinol-phosphate aminotransferase (347 aa).

The residue at position 209 (Lys-209) is an N6-(pyridoxal phosphate)lysine.

Belongs to the class-II pyridoxal-phosphate-dependent aminotransferase family. Histidinol-phosphate aminotransferase subfamily. In terms of assembly, homodimer. It depends on pyridoxal 5'-phosphate as a cofactor.

The catalysed reaction is L-histidinol phosphate + 2-oxoglutarate = 3-(imidazol-4-yl)-2-oxopropyl phosphate + L-glutamate. It participates in amino-acid biosynthesis; L-histidine biosynthesis; L-histidine from 5-phospho-alpha-D-ribose 1-diphosphate: step 7/9. The chain is Histidinol-phosphate aminotransferase from Geotalea uraniireducens (strain Rf4) (Geobacter uraniireducens).